A 469-amino-acid chain; its full sequence is Tryptophan biosynthesis protein TrpCF (469 aa).

Positions 1–257 are indole-3-glycerol phosphate synthase; the sequence is MNSILKEIIN…EAVCKMILGN (257 aa). An N-(5'-phosphoribosyl)anthranilate isomerase region spans residues 258–469; sequence NKICGLTQSS…YRNLICLGKK (212 aa).

This sequence in the N-terminal section; belongs to the TrpC family. It in the C-terminal section; belongs to the TrpF family. As to quaternary structure, monomer.

It carries out the reaction N-(5-phospho-beta-D-ribosyl)anthranilate = 1-(2-carboxyphenylamino)-1-deoxy-D-ribulose 5-phosphate. The enzyme catalyses 1-(2-carboxyphenylamino)-1-deoxy-D-ribulose 5-phosphate + H(+) = (1S,2R)-1-C-(indol-3-yl)glycerol 3-phosphate + CO2 + H2O. Its pathway is amino-acid biosynthesis; L-tryptophan biosynthesis; L-tryptophan from chorismate: step 3/5. It functions in the pathway amino-acid biosynthesis; L-tryptophan biosynthesis; L-tryptophan from chorismate: step 4/5. Its function is as follows. Bifunctional enzyme that catalyzes two sequential steps of tryptophan biosynthetic pathway. The first reaction is catalyzed by the isomerase, coded by the TrpF domain; the second reaction is catalyzed by the synthase, coded by the TrpC domain. This Buchnera aphidicola subsp. Baizongia pistaciae (strain Bp) protein is Tryptophan biosynthesis protein TrpCF (trpC).